The following is a 252-amino-acid chain: Endonuclease NucS (252 aa).

This sequence belongs to the NucS endonuclease family.

Its subcellular location is the cytoplasm. Its function is as follows. Cleaves both 3' and 5' ssDNA extremities of branched DNA structures. In Sulfurisphaera tokodaii (strain DSM 16993 / JCM 10545 / NBRC 100140 / 7) (Sulfolobus tokodaii), this protein is Endonuclease NucS.